The primary structure comprises 446 residues: 3',5'-cyclic-AMP phosphodiesterase 7B (446 aa).

Positions 97–420 constitute a PDEase domain; sequence LDEDYLGQAR…AQWKSLLSNQ (324 aa). Residue His-173 is the Proton donor of the active site. Positions 177, 213, 214, and 323 each coordinate a divalent metal cation. The interval 422–446 is disordered; sequence RRRGSGQDLAGPAPETLEQTEGATP. Ser-426 carries the phosphoserine modification. Thr-445 bears the Phosphothreonine mark.

This sequence belongs to the cyclic nucleotide phosphodiesterase family. PDE7 subfamily. The cofactor is a divalent metal cation. Highly expressed in brain.

The catalysed reaction is 3',5'-cyclic AMP + H2O = AMP + H(+). It participates in purine metabolism; 3',5'-cyclic AMP degradation; AMP from 3',5'-cyclic AMP: step 1/1. Inhibited by dipyridamole, IBMX and SCH 51866. Insensitive to zaprinast, rolipram, and milrinone. Its function is as follows. Hydrolyzes the second messenger cAMP, which is a key regulator of many important physiological processes. May be involved in the control of cAMP-mediated neural activity and cAMP metabolism in the brain. The sequence is that of 3',5'-cyclic-AMP phosphodiesterase 7B from Mus musculus (Mouse).